The sequence spans 791 residues: Calcium-transporting ATPase CtpE (791 aa).

3 helical membrane-spanning segments follow: residues 53-73 (LFVIVLSTGSVINGAFGLLII), 213-233 (ILQFITYLLVPAGLLTIYTQL), and 252-272 (VPMVPEGLVLMTSIAFAVGVV). Catalysis depends on Asp-299, which acts as the 4-aspartylphosphate intermediate. Mg(2+) is bound by residues Asp-299, Thr-301, and Asp-530. The next 6 helical transmembrane spans lie at 596–616 (VYSVLLAILVGIGGLSAKIFG), 627–647 (IHVTIAAWFTIGIPAFILSLA), 664–684 (AALPSGLVVGTATFVSYLVAY), 697–717 (ASTAALITLLASSLWVLAVVA), 725–745 (VLLVACSMLAYVLIFSIPLAQ), and 757–777 (VTSVALGIGLAGAALIEVLWW).

Belongs to the cation transport ATPase (P-type) (TC 3.A.3) family.

It is found in the cell membrane. The enzyme catalyses Ca(2+)(in) + ATP + H2O = Ca(2+)(out) + ADP + phosphate + H(+). Functionally, P-type ATPase involved in specific uptake of calcium. Essential for growth and maintenance of cell surface integrity under Ca(2+)-deficient conditions. This chain is Calcium-transporting ATPase CtpE, found in Mycolicibacterium smegmatis (strain ATCC 700084 / mc(2)155) (Mycobacterium smegmatis).